Consider the following 392-residue polypeptide: Chaperone protein DnaJ (392 aa).

A J domain is found at 5 to 75 (DYYEVLGIDK…QKKQQYDQFG (71 aa)). The CR-type zinc-finger motif lies at 148–229 (GVEKTIKYKR…CHGTGTAKET (82 aa)). Positions 161, 164, 177, 180, 203, 206, 217, and 220 each coordinate Zn(2+). CXXCXGXG motif repeat units lie at residues 161–168 (CENCHGTG), 177–184 (CPTCNGQG), 203–210 (CPDCHGTG), and 217–224 (CKHCHGTG).

The protein belongs to the DnaJ family. Homodimer. Requires Zn(2+) as cofactor.

Its subcellular location is the cytoplasm. Participates actively in the response to hyperosmotic and heat shock by preventing the aggregation of stress-denatured proteins and by disaggregating proteins, also in an autonomous, DnaK-independent fashion. Unfolded proteins bind initially to DnaJ; upon interaction with the DnaJ-bound protein, DnaK hydrolyzes its bound ATP, resulting in the formation of a stable complex. GrpE releases ADP from DnaK; ATP binding to DnaK triggers the release of the substrate protein, thus completing the reaction cycle. Several rounds of ATP-dependent interactions between DnaJ, DnaK and GrpE are required for fully efficient folding. Also involved, together with DnaK and GrpE, in the DNA replication of plasmids through activation of initiation proteins. The chain is Chaperone protein DnaJ from Fusobacterium nucleatum subsp. nucleatum (strain ATCC 25586 / DSM 15643 / BCRC 10681 / CIP 101130 / JCM 8532 / KCTC 2640 / LMG 13131 / VPI 4355).